The following is a 503-amino-acid chain: MSDFQLEILKKLDELDEIKSTLATFPQHGSQDVLSALNSLKAHNKLEFSKVDTVTYDLTKEGAQILNEGSYEIKLVKLIQELGQLQIKDVMSKLGPQVGKVGQARAFKNGWIAKNASNELELSAKLQNTDLNELTDETQSILAQIKNNSHLDSIDAKILNDLKKRKLIAQGKITDFNVTKGPEFSTDLTKLETDLTSDMVSTNAYKDLKFKPYNFNSQGVQISSGALHPLNKVREEFRQIFFSMGFTEMPSNQYVETGFWNFDALYVPQQHPARDLQDTFYIKDPLTADLPDDKTYMDNIKAVHEQGRFGSIGYRYNWKPEECQKLVLRTHSTAISARMLHDLAKDPKPTRLFSIDRVFRNEAVDATHLAEFHQVEGVLADYNITLGDLIKFMEEFFERMGVTGLRFKPTYNPYTEPSMEIFSWHEGLQKWVEIGNSGMFRPEMLESMGLPKDLRVLGWGLSLERPTMIKYKVQNIRELLGHKVSLDFIETNPAARLDEDLYE.

S2 carries the post-translational modification N-acetylserine. Residues 2-173 (SDFQLEILKK…KRKLIAQGKI (172 aa)) form a contains the major tRNA-Phe binding sites region. Residues T333, 374–376 (QVE), and Y414 each bind L-phenylalanine. Residue E416 coordinates Mg(2+). F440 lines the L-phenylalanine pocket.

It belongs to the class-II aminoacyl-tRNA synthetase family. Phe-tRNA synthetase alpha subunit type 2 subfamily. In terms of assembly, tetramer of two alpha and two beta subunits. Mg(2+) is required as a cofactor.

Its subcellular location is the cytoplasm. The catalysed reaction is tRNA(Phe) + L-phenylalanine + ATP = L-phenylalanyl-tRNA(Phe) + AMP + diphosphate + H(+). The chain is Phenylalanine--tRNA ligase alpha subunit (FRS2) from Saccharomyces cerevisiae (strain ATCC 204508 / S288c) (Baker's yeast).